Consider the following 118-residue polypeptide: NADH-quinone oxidoreductase subunit A (118 aa).

Transmembrane regions (helical) follow at residues I8 to L28, F61 to A81, and V86 to L106.

This sequence belongs to the complex I subunit 3 family. As to quaternary structure, NDH-1 is composed of 14 different subunits. Subunits NuoA, H, J, K, L, M, N constitute the membrane sector of the complex.

The protein localises to the cell membrane. It carries out the reaction a quinone + NADH + 5 H(+)(in) = a quinol + NAD(+) + 4 H(+)(out). Functionally, NDH-1 shuttles electrons from NADH, via FMN and iron-sulfur (Fe-S) centers, to quinones in the respiratory chain. The immediate electron acceptor for the enzyme in this species is believed to be a menaquinone. Couples the redox reaction to proton translocation (for every two electrons transferred, four hydrogen ions are translocated across the cytoplasmic membrane), and thus conserves the redox energy in a proton gradient. The chain is NADH-quinone oxidoreductase subunit A from Carboxydothermus hydrogenoformans (strain ATCC BAA-161 / DSM 6008 / Z-2901).